Consider the following 277-residue polypeptide: Large ribosomal subunit protein uL2 (277 aa).

The interval 225–277 is disordered; that stretch reads MNPVDHPHGGGEGKTSGGRNSVTPWGVPTKGKKTRKRGKHSDKYIKVSSVRKR. A compositionally biased stretch (basic residues) spans 254–264; the sequence is KGKKTRKRGKH.

This sequence belongs to the universal ribosomal protein uL2 family. As to quaternary structure, part of the 50S ribosomal subunit. Forms a bridge to the 30S subunit in the 70S ribosome.

Functionally, one of the primary rRNA binding proteins. Required for association of the 30S and 50S subunits to form the 70S ribosome, for tRNA binding and peptide bond formation. It has been suggested to have peptidyltransferase activity; this is somewhat controversial. Makes several contacts with the 16S rRNA in the 70S ribosome. In Anaplasma marginale (strain Florida), this protein is Large ribosomal subunit protein uL2.